The chain runs to 527 residues: Putative ribose/galactose/methyl galactoside import ATP-binding protein 2 (527 aa).

Positions 1–31 (MFTARVARPMAGDDAPAASSGSTGSSAPPAS) are disordered. The segment covering 12-31 (GDDAPAASSGSTGSSAPPAS) has biased composition (low complexity). ABC transporter domains are found at residues 38–274 (LEVR…VGRE) and 284–523 (VPIG…RIMD). 70 to 77 (GENGAGKS) contributes to the ATP binding site.

Belongs to the ABC transporter superfamily. Carbohydrate importer 2 (CUT2) (TC 3.A.1.2) family.

It localises to the cell inner membrane. It catalyses the reaction D-ribose(out) + ATP + H2O = D-ribose(in) + ADP + phosphate + H(+). The catalysed reaction is D-galactose(out) + ATP + H2O = D-galactose(in) + ADP + phosphate + H(+). Functionally, part of an ABC transporter complex involved in carbohydrate import. Could be involved in ribose, galactose and/or methyl galactoside import. Responsible for energy coupling to the transport system. This Burkholderia lata (strain ATCC 17760 / DSM 23089 / LMG 22485 / NCIMB 9086 / R18194 / 383) protein is Putative ribose/galactose/methyl galactoside import ATP-binding protein 2.